Consider the following 454-residue polypeptide: Innexin-19 (454 aa).

Residues 1-48 (MWRTPASTGPLRQDRQMFFHATLARSFINALSVRGDDDAVDRLNYYYT) lie on the Cytoplasmic side of the membrane. Residues 49 to 69 (PLILAVCCLVISAKQYGGTPI) traverse the membrane as a helical segment. The Extracellular segment spans residues 70–118 (ECWVNPHSRESMEEYIESYCWIQNTYWIPMYENVPDDHTAREEKQIGYY). The chain crosses the membrane as a helical span at residues 119–139 (QWVPFILIAEALMFSLPCIFW). The Cytoplasmic portion of the chain corresponds to 140 to 214 (RLCSFQSGLN…SRFLSGQCLS (75 aa)). The chain crosses the membrane as a helical span at residues 215-235 (ILHSFTKLLYSMNVVAQFLIL). At 236 to 300 (NACLKSSDFL…ALLINIINEK (65 aa)) the chain is on the extracellular side. A helical membrane pass occupies residues 301-321 (VFAFLWCWYMILAIITTCSFI). The Cytoplasmic portion of the chain corresponds to 322-454 (YWIANSFIHS…SNPGQTKSFL (133 aa)).

Belongs to the pannexin family. In terms of tissue distribution, specifically expressed in sensory neurons and interneurons in the head and tail. Expressed in neurons AWC, ASH, AFD, ASI, ADL, ASK, BAG, AWB, and ADF (head sensory neurons); ADA, AIZ, RIC, AIY, and AIM (head interneurons); PHA and PHB (tail sensory neurons); and PVC and PVQ (tail interneurons).

Its subcellular location is the cell membrane. It localises to the cell junction. It is found in the gap junction. Structural component of the gap junctions that specifically coordinates left-right asymmetry in the developing nervous system. Acts by forming gap junction network linking embryonic neurons and providing electrical coupling between cells, leading to promote or inhibit AWC signaling. Required for the left and right AWC olfactory neurons to establish asymmetric patterns of gene expression during embryogenesis. Acts autonomously. This chain is Innexin-19 (inx-19), found in Caenorhabditis elegans.